The following is a 436-amino-acid chain: Protein disulfide-isomerase (436 aa).

The Thioredoxin domain occupies 216 to 365; sequence FLAGKIDPSI…VEDATESAKA (150 aa). Catalysis depends on nucleophile residues Cys-266 and Cys-269. Cys-266 and Cys-269 are oxidised to a cystine. The tract at residues 328–436 is disordered; it reads TLVPHCRGSR…ASASSVKDEL (109 aa). Basic residues predominate over residues 334–343; the sequence is RGSRPVHRRE. Low complexity-rich tracts occupy residues 362-377 and 385-436; these read SAKA…AASA and VKSG…KDEL. Residues 433–436 carry the Prevents secretion from ER motif; the sequence is KDEL.

It belongs to the protein disulfide isomerase family.

It is found in the endoplasmic reticulum lumen. It carries out the reaction Catalyzes the rearrangement of -S-S- bonds in proteins.. In terms of biological role, participates in the folding of proteins containing disulfide bonds, may be involved in glycosylation, prolyl hydroxylation and triglyceride transfer. This is Protein disulfide-isomerase from Alternaria alternata (Alternaria rot fungus).